The chain runs to 172 residues: Conglutin-7 (172 aa).

The N-terminal stretch at 1-21 (MAKLTILVALALFLLAAHASA) is a signal peptide. 4 cysteine pairs are disulfide-bonded: C33/C116, C45/C103, C104/C152, and C118/C160. Residues 54-98 (QRDEDSYGRDPYSPSQDPYSPSQDPDRRDPYSPSPYDRRGAGSSQ) are disordered. Positions 62-76 (RDPYSPSQDPYSPSQ) are enriched in low complexity. 3 positions are modified to 4-hydroxyproline: P67, P74, and P86. Basic and acidic residues predominate over residues 77 to 98 (DPDRRDPYSPSPYDRRGAGSSQ).

This sequence belongs to the 2S seed storage albumins family. Post-translationally, the hydroxyproline modifications determined by mass spectrometry are probably 4-hydroxyproline as determined for other extracellular plant proteins. Expressed in seeds, not expressed in leaves, roots and pegs.

Its function is as follows. Weak inhibitor of trypsin. The chain is Conglutin-7 from Arachis hypogaea (Peanut).